A 358-amino-acid chain; its full sequence is Mannonate dehydratase (358 aa).

It belongs to the mannonate dehydratase family. The cofactor is Fe(2+). Mn(2+) is required as a cofactor.

It catalyses the reaction D-mannonate = 2-dehydro-3-deoxy-D-gluconate + H2O. It functions in the pathway carbohydrate metabolism; pentose and glucuronate interconversion. Catalyzes the dehydration of D-mannonate. The chain is Mannonate dehydratase from Lactococcus lactis subsp. lactis (strain IL1403) (Streptococcus lactis).